A 79-amino-acid polypeptide reads, in one-letter code: MSEVAEKVKKIVVEHLGVDEAKVTPEASFIDDLGADSLDTVELVMAFEEAFGVEIPEDAAEKIGTVKDAIDYIEKKKAE.

Residues 2-77 enclose the Carrier domain; that stretch reads SEVAEKVKKI…DAIDYIEKKK (76 aa). Ser-37 carries the O-(pantetheine 4'-phosphoryl)serine modification.

This sequence belongs to the acyl carrier protein (ACP) family. In terms of processing, 4'-phosphopantetheine is transferred from CoA to a specific serine of apo-ACP by AcpS. This modification is essential for activity because fatty acids are bound in thioester linkage to the sulfhydryl of the prosthetic group.

Its subcellular location is the cytoplasm. Its pathway is lipid metabolism; fatty acid biosynthesis. Functionally, carrier of the growing fatty acid chain in fatty acid biosynthesis. This is Acyl carrier protein from Acidiphilium cryptum (strain JF-5).